The sequence spans 629 residues: Microtubule-associated protein 70-3 (629 aa).

The tract at residues 1–54 (MEEGGYAFEVNNGRPTASEFGTTARISSPSLTMSSSFREGGGGGGSKGLTRRRS) is disordered. Polar residues predominate over residues 13–33 (GRPTASEFGTTARISSPSLTM). Residues 75-375 (VKVELNRLEN…ADRAAKSEAQ (301 aa)) are a coiled coil. The interval 257–493 (ILDKLHRQKV…FPLNQSSEGT (237 aa)) is required for targeting to microtubules. Disordered regions lie at residues 391–421 (LRGPSSSGNRSTPEGRSMSNGPSRRQSLGGA), 458–519 (GTSR…DSVP), and 578–629 (AMEK…RSTQ). The segment covering 393–416 (GPSSSGNRSTPEGRSMSNGPSRRQ) has biased composition (polar residues). Positions 544–592 (LRDKDEAIEMLAKKVETLTKAMEVEAKKMRREVAAMEKEVSAMRVDNKG) form a coiled coil. Over residues 578 to 596 (AMEKEVSAMRVDNKGSDSR) the composition is skewed to basic and acidic residues. Polar residues predominate over residues 603-613 (NSKGASTTAQL).

Belongs to the MAP70 family.

Its subcellular location is the cytoplasm. It is found in the cytoskeleton. In terms of biological role, plant-specific protein that interact with microtubules. This chain is Microtubule-associated protein 70-3 (MAP70.3), found in Arabidopsis thaliana (Mouse-ear cress).